Here is a 234-residue protein sequence, read N- to C-terminus: HTH-type transcriptional regulator MT1864 (234 aa).

Residues 15 to 75 (EQIEAKIVEL…LLLVDAYSDL (61 aa)) enclose the HTH tetR-type domain. The H-T-H motif DNA-binding region spans 38 to 57 (SLRAIARNLGMVSSAVYRYV).

In terms of assembly, homodimer.

It localises to the cytoplasm. In terms of biological role, may participate in the regulatory network that controls the expression of MmpL lipid transporters. In Mycobacterium tuberculosis (strain CDC 1551 / Oshkosh), this protein is HTH-type transcriptional regulator MT1864.